The chain runs to 671 residues: Probable potassium transport system protein Kup (671 aa).

The interval 1–43 (MSQIPSPNDPASTGAAPSSAAVPAGPSATPAPSPTAGFSLPGH) is disordered. Over residues 10-37 (PASTGAAPSSAAVPAGPSATPAPSPTAG) the composition is skewed to low complexity. Helical transmembrane passes span 52–72 (LAALAVGALGVVYGDIGTSPL), 92–112 (VLGVLSLVFWAMTFVVTFKYM), 147–167 (LMLGLFGAALLYGDGIITPAI), 181–201 (PAMERAVVPATVVILVFLFLF), 209–229 (VGAVFGPVMLVWFATIAVLGV), 255–275 (GWHGFLVLGGVVLVITGGEAL), 291–311 (WLGLAMPALLLNYLGQGALLL), 323–343 (LLAPEWALYPTIAIATAAAIV), 381–401 (IYLPEVNWMLGTACLALVLGF), 407–427 (LASAYGIAVTGTMIVTTLLFH), 441–461 (AWPLTVLFLTVDAAFFLANVV), and 465–485 (DGGWFPIAAAALVFTLMSTWK).

This sequence belongs to the HAK/KUP transporter (TC 2.A.72) family.

It is found in the cell inner membrane. The enzyme catalyses K(+)(in) + H(+)(in) = K(+)(out) + H(+)(out). In terms of biological role, transport of potassium into the cell. Likely operates as a K(+):H(+) symporter. The protein is Probable potassium transport system protein Kup of Anaeromyxobacter dehalogenans (strain 2CP-1 / ATCC BAA-258).